A 464-amino-acid chain; its full sequence is Argininosuccinate lyase (464 aa).

The protein belongs to the lyase 1 family. Argininosuccinate lyase subfamily.

Its subcellular location is the cytoplasm. It catalyses the reaction 2-(N(omega)-L-arginino)succinate = fumarate + L-arginine. It functions in the pathway amino-acid biosynthesis; L-arginine biosynthesis; L-arginine from L-ornithine and carbamoyl phosphate: step 3/3. In Frankia casuarinae (strain DSM 45818 / CECT 9043 / HFP020203 / CcI3), this protein is Argininosuccinate lyase.